The sequence spans 264 residues: Zinc import ATP-binding protein ZnuC (264 aa).

The ABC transporter domain maps to 11 to 226; the sequence is IELQNIKVVF…PTFIHLFGDQ (216 aa). 43–50 contributes to the ATP binding site; it reads GPNGGGKS.

This sequence belongs to the ABC transporter superfamily. Zinc importer (TC 3.A.1.15.5) family. The complex is composed of two ATP-binding proteins (ZnuC), two transmembrane proteins (ZnuB) and a solute-binding protein (ZnuA).

Its subcellular location is the cell inner membrane. It catalyses the reaction Zn(2+)(out) + ATP(in) + H2O(in) = Zn(2+)(in) + ADP(in) + phosphate(in) + H(+)(in). In terms of biological role, part of the ABC transporter complex ZnuABC involved in zinc import. Responsible for energy coupling to the transport system. This Mannheimia succiniciproducens (strain KCTC 0769BP / MBEL55E) protein is Zinc import ATP-binding protein ZnuC.